The sequence spans 331 residues: Septin homolog spn2 (331 aa).

Positions 29–301 (RGFQFNVMVV…EKFRFKQLSS (273 aa)) constitute a Septin-type G domain. Residues 39 to 46 (GPSGSGKS) are G1 motif. GTP is bound by residues 39–46 (GPSGSGKS), Thr73, Gly99, 179–187 (KSDSLTLEE), Gly235, and Arg250. A G3 motif region spans residues 96–99 (DTPG). Positions 178–181 (AKSD) are G4 motif. The interval 311 to 331 (RMGSPAPVYPSEPHLHTATAQ) is disordered.

The protein belongs to the TRAFAC class TrmE-Era-EngA-EngB-Septin-like GTPase superfamily. Septin GTPase family. As to quaternary structure, component of the septin complex composed of two copies of each spn1, spn2, spn3 and spn4. Component of the sporulation-specific septin complex composed of at least spn2, spn5, spn6 and spn7.

It is found in the cytoplasm. The protein resides in the cell cortex. It localises to the forespore membrane. In terms of biological role, plays a role in the cell cycle. Involved in a late stage of septum formation leading to the separation of the daughter cells. Involved in the correct orientation of forespore membrane extension during sporulation. Binds phosphatidylinositol 4-phosphate. In Schizosaccharomyces pombe (strain 972 / ATCC 24843) (Fission yeast), this protein is Septin homolog spn2 (spn2).